The following is a 180-amino-acid chain: UPF0227 protein YcfP (180 aa).

It belongs to the UPF0227 family.

This is UPF0227 protein YcfP from Salmonella arizonae (strain ATCC BAA-731 / CDC346-86 / RSK2980).